The chain runs to 211 residues: Regulator of G-protein signaling 2 (211 aa).

2 disordered regions span residues Arg-14–Met-33 and Leu-49–Ala-68. The necessary for membrane association stretch occupies residues Lys-32–Gln-66. Positions Leu-79–Cys-116 are necessary to inhibit protein synthesis. The region spanning Ala-83–Cys-199 is the RGS domain.

Interacts with GNAQ. Does not interact with GNAI1 and GNAI3. Interacts with EIF2B5. Interacts with PRKG1 (isoform alpha). In terms of processing, phosphorylated by protein kinase C. Phosphorylation by PRKG1 leads to activation of RGS2 activity. Expressed in acute myelogenous leukemia (AML) and in acute lymphoblastic leukemia (ALL).

The protein resides in the cell membrane. Its subcellular location is the cytoplasm. It is found in the nucleus. It localises to the nucleolus. The protein localises to the mitochondrion. Regulates G protein-coupled receptor signaling cascades. Inhibits signal transduction by increasing the GTPase activity of G protein alpha subunits, thereby driving them into their inactive GDP-bound form. It is involved in the negative regulation of the angiotensin-activated signaling pathway. Plays a role in the regulation of blood pressure in response to signaling via G protein-coupled receptors and GNAQ. Plays a role in regulating the constriction and relaxation of vascular smooth muscle. Binds EIF2B5 and blocks its activity, thereby inhibiting the translation of mRNA into protein. This is Regulator of G-protein signaling 2 (RGS2) from Homo sapiens (Human).